Consider the following 191-residue polypeptide: Pyridoxal 5'-phosphate synthase subunit PdxT (191 aa).

Residue 48 to 50 (GES) coordinates L-glutamine. The Nucleophile role is filled by Cys79. L-glutamine-binding positions include Arg106 and 134–135 (IR). Active-site charge relay system residues include His170 and Glu172.

Belongs to the glutaminase PdxT/SNO family. In terms of assembly, in the presence of PdxS, forms a dodecamer of heterodimers. Only shows activity in the heterodimer.

It carries out the reaction aldehydo-D-ribose 5-phosphate + D-glyceraldehyde 3-phosphate + L-glutamine = pyridoxal 5'-phosphate + L-glutamate + phosphate + 3 H2O + H(+). The catalysed reaction is L-glutamine + H2O = L-glutamate + NH4(+). It participates in cofactor biosynthesis; pyridoxal 5'-phosphate biosynthesis. Functionally, catalyzes the hydrolysis of glutamine to glutamate and ammonia as part of the biosynthesis of pyridoxal 5'-phosphate. The resulting ammonia molecule is channeled to the active site of PdxS. The protein is Pyridoxal 5'-phosphate synthase subunit PdxT of Oenococcus oeni (strain ATCC BAA-331 / PSU-1).